The sequence spans 270 residues: Pantoate kinase (270 aa).

Belongs to the GHMP kinase family. PoK subfamily.

The catalysed reaction is (R)-pantoate + ATP = (R)-4-phosphopantoate + ADP + H(+). It participates in cofactor biosynthesis; coenzyme A biosynthesis. Functionally, phosphorylates (R)-pantoate to form (R)-4-phosphopantoate in the CoA biosynthesis pathway. The protein is Pantoate kinase of Methanocaldococcus jannaschii (strain ATCC 43067 / DSM 2661 / JAL-1 / JCM 10045 / NBRC 100440) (Methanococcus jannaschii).